We begin with the raw amino-acid sequence, 390 residues long: Monomeric sarcosine oxidase (390 aa).

6–36 (DVIVVGAGSMGMAAGYQLAKQGVKTLLVDAF) provides a ligand contact to FAD. Cysteine 316 carries the post-translational modification S-8alpha-FAD cysteine.

As to quaternary structure, monomer. FAD is required as a cofactor.

It is found in the cytoplasm. The catalysed reaction is sarcosine + O2 + H2O = formaldehyde + glycine + H2O2. Its activity is regulated as follows. Pyrrole-2-carboxylate is a competitive inhibitor. N-(cyclopropyl)glycine (CPG) is a mechanism-based inhibitor and inactivates the enzyme by covalently modifying the flavin. In terms of biological role, catalyzes the oxidative demethylation of sarcosine. Can also oxidize other secondary amino acids such as N-methyl-L-alanine. The chain is Monomeric sarcosine oxidase (soxA) from Bacillus sp. (strain B-0618).